Here is a 142-residue protein sequence, read N- to C-terminus: uncharacterized protein (142 aa).

One can recognise an N-acetyltransferase domain in the interval 2–142 (IHMKQLTSKE…IESYLFRKPV (141 aa)).

This sequence belongs to the acetyltransferase family.

This is an uncharacterized protein from Bacillus subtilis (strain 168).